The primary structure comprises 310 residues: Homocysteine S-methyltransferase (310 aa).

Residues 1–310 (MSQNNPLRAL…ADIAALKARS (310 aa)) form the Hcy-binding domain. Zn(2+)-binding residues include Cys229, Cys295, and Cys296.

In terms of assembly, monomer. Requires Zn(2+) as cofactor.

The enzyme catalyses S-methyl-L-methionine + L-homocysteine = 2 L-methionine + H(+). Catalyzes methyl transfer from S-methylmethionine or S-adenosylmethionine (less efficient) to homocysteine, selenohomocysteine and less efficiently selenocysteine. The polypeptide is Homocysteine S-methyltransferase (mmuM) (Escherichia coli (strain K12)).